The sequence spans 467 residues: Keratin, type 1 cytoskeletal 11 (467 aa).

A head region spans residues 1–100 (MSYSSFSIAQ…GGTDFLLGTS (100 aa)). The segment covering 12 to 30 (SRVPSLSGTRSSSSYSLKS) has biased composition (low complexity). The interval 12–32 (SRVPSLSGTRSSSSYSLKSDL) is disordered. A coil 1A region spans residues 101–137 (GKEAMQNLNDRLADYLARVRSLEDRNRELEQKIREWY). Positions 101–413 (GKEAMQNLND…TLLEGDAGRS (313 aa)) constitute an IF rod domain. The segment at 138 to 156 (EKQGAGTKRKDFSHYFKII) is linker 1. A coil 1B region spans residues 157–248 (ADLQNQINAG…SHDEDMKALR (92 aa)). A linker 12 region spans residues 249-268 (SQLGGQVNVEVDAAPAEDLT). The coil 2 stretch occupies residues 269–416 (KKLEIIRQRY…EGDAGRSHSS (148 aa)). A disordered region spans residues 409 to 430 (DAGRSHSSSHLSSTVSKDKVPV). A tail region spans residues 417–463 (SHLSSTVSKDKVPVSSPNVITKVRTIVEEKINGQVISKKEYEGSPDQ).

The protein belongs to the intermediate filament family. As to quaternary structure, heterotetramer of two type I and two type II keratins. Expressed in the outermost cell layers of skin epidermis (at protein level).

The chain is Keratin, type 1 cytoskeletal 11 from Protopterus aethiopicus (Marbled lungfish).